The primary structure comprises 329 residues: IDS-like terpene synthase 1 (329 aa).

Residues D79 and D83 each contribute to the Mg(2+) site.

Belongs to the FPP/GGPP synthase family. Mg(2+) serves as cofactor.

It catalyses the reaction (2E)-geranyl diphosphate + H2O = linalool + diphosphate. The enzyme catalyses (2E,6E)-farnesyl diphosphate + H2O = (6E)-nerolidol + diphosphate. Terpene synthase that shows monoterpene synthase activity and produces linalool, using geranyl diphosphate (GPP) as substrate. Also shows sesquiterpene synthase activity as it is able to convert farnesyl diphosphate (FPP) into (E)-nerolidol. In Melampsora lini (Rust fungus), this protein is IDS-like terpene synthase 1.